The primary structure comprises 407 residues: Histone-lysine N-methyltransferase SUV39H2 (407 aa).

The Chromo domain occupies 43 to 101 (YEVEYLCDYKVEEGKEYYLVKWKGWPESSNTWEPQKNLKCPKLLENFLSDKDEYLSRMK). Residues 185–243 (TGCECSDCPAEKCCPKEAGFILAYNKQKKLKIQPGLPIYECNSFCRCGPDCPNRIVQKG) enclose the Pre-SET domain. Positions 187, 189, 192, 197, 198, 225, 229, 231, and 235 each coordinate Zn(2+). Residues 246–369 (YSLCIFRTNN…AGEELTFDYQ (124 aa)) form the SET domain. S-adenosyl-L-methionine contacts are provided by residues 257-259 (RGW), tyrosine 300, and 326-327 (NH). Zn(2+) is bound by residues cysteine 329, cysteine 395, cysteine 397, and cysteine 402. The Post-SET domain occupies 391–407 (IRTVCKCGAVCCRGYLN).

This sequence belongs to the class V-like SAM-binding methyltransferase superfamily. Histone-lysine methyltransferase family. Suvar3-9 subfamily.

It is found in the nucleus. It localises to the chromosome. Its subcellular location is the centromere. It carries out the reaction L-lysyl(9)-[histone H3] + 3 S-adenosyl-L-methionine = N(6),N(6),N(6)-trimethyl-L-lysyl(9)-[histone H3] + 3 S-adenosyl-L-homocysteine + 3 H(+). Its function is as follows. Histone methyltransferase that specifically trimethylates 'Lys-9' of histone H3 using monomethylated H3 'Lys-9' as substrate. H3 'Lys-9' trimethylation represents a specific tag for epigenetic transcriptional repression by recruiting HP1 (CBX1, CBX3 and/or CBX5) proteins to methylated histones. Mainly functions in heterochromatin regions, thereby playing a central role in the establishment of constitutive heterochromatin at pericentric and telomere regions. H3 'Lys-9' trimethylation is also required to direct DNA methylation at pericentric repeats. SUV39H1 is targeted to histone H3 via its interaction with RB1 and is involved in many processes. This chain is Histone-lysine N-methyltransferase SUV39H2 (SUV39H2), found in Gallus gallus (Chicken).